The following is a 342-amino-acid chain: Holliday junction branch migration complex subunit RuvB (342 aa).

The interval 2-181 (TDNPLLSSAS…FGIPVRLQFY (180 aa)) is large ATPase domain (RuvB-L). Residues L20, R21, G62, K65, T66, T67, R171, Y181, and R218 each contribute to the ATP site. T66 is a binding site for Mg(2+). Residues 182–252 (SVEELERVVA…IADNALTRLE (71 aa)) are small ATPAse domain (RuvB-S). The head domain (RuvB-H) stretch occupies residues 255-342 (KIGLDLQDRR…QMPGLFGPDE (88 aa)). Positions 291, 310, and 315 each coordinate DNA.

This sequence belongs to the RuvB family. Homohexamer. Forms an RuvA(8)-RuvB(12)-Holliday junction (HJ) complex. HJ DNA is sandwiched between 2 RuvA tetramers; dsDNA enters through RuvA and exits via RuvB. An RuvB hexamer assembles on each DNA strand where it exits the tetramer. Each RuvB hexamer is contacted by two RuvA subunits (via domain III) on 2 adjacent RuvB subunits; this complex drives branch migration. In the full resolvosome a probable DNA-RuvA(4)-RuvB(12)-RuvC(2) complex forms which resolves the HJ.

It localises to the cytoplasm. The catalysed reaction is ATP + H2O = ADP + phosphate + H(+). Its function is as follows. The RuvA-RuvB-RuvC complex processes Holliday junction (HJ) DNA during genetic recombination and DNA repair, while the RuvA-RuvB complex plays an important role in the rescue of blocked DNA replication forks via replication fork reversal (RFR). RuvA specifically binds to HJ cruciform DNA, conferring on it an open structure. The RuvB hexamer acts as an ATP-dependent pump, pulling dsDNA into and through the RuvAB complex. RuvB forms 2 homohexamers on either side of HJ DNA bound by 1 or 2 RuvA tetramers; 4 subunits per hexamer contact DNA at a time. Coordinated motions by a converter formed by DNA-disengaged RuvB subunits stimulates ATP hydrolysis and nucleotide exchange. Immobilization of the converter enables RuvB to convert the ATP-contained energy into a lever motion, pulling 2 nucleotides of DNA out of the RuvA tetramer per ATP hydrolyzed, thus driving DNA branch migration. The RuvB motors rotate together with the DNA substrate, which together with the progressing nucleotide cycle form the mechanistic basis for DNA recombination by continuous HJ branch migration. Branch migration allows RuvC to scan DNA until it finds its consensus sequence, where it cleaves and resolves cruciform DNA. The polypeptide is Holliday junction branch migration complex subunit RuvB (Novosphingobium aromaticivorans (strain ATCC 700278 / DSM 12444 / CCUG 56034 / CIP 105152 / NBRC 16084 / F199)).